An 891-amino-acid chain; its full sequence is 26S proteasome non-ATPase regulatory subunit 2 homolog B (891 aa).

Positions 1-43 are disordered; it reads MAPVPDPNSVGGGAKRDEATTKIPSKDSKKKDDKKEEDLSEED. The span at 14–37 shows a compositional bias: basic and acidic residues; the sequence is AKRDEATTKIPSKDSKKKDDKKEE. PC repeat units follow at residues 414-447, 448-484, 485-519, 522-556, 565-594, 674-705, and 724-739; these read SAVA…PVVA, GALL…SVRI, GAIM…PLDV, FAAL…AELG, LGLG…KIRK, LALG…EVAM, and AGML…KDAS.

Belongs to the proteasome subunit S2 family. As to quaternary structure, component of the 19S regulatory particle (RP/PA700) base subcomplex of the 26S proteasome. The 26S proteasome is composed of a core protease (CP), known as the 20S proteasome, capped at one or both ends by the 19S regulatory particle (RP/PA700). The RP/PA700 complex is composed of at least 17 different subunits in two subcomplexes, the base and the lid, which form the portions proximal and distal to the 20S proteolytic core, respectively. In terms of processing, ubiquitinated. Expressed in stems, leaves, buds, flowers, siliques and developing seeds.

Acts as a regulatory subunit of the 26 proteasome which is involved in the ATP-dependent degradation of ubiquitinated proteins. This chain is 26S proteasome non-ATPase regulatory subunit 2 homolog B (RPN1B), found in Arabidopsis thaliana (Mouse-ear cress).